A 217-amino-acid polypeptide reads, in one-letter code: Variable small protein 22 (217 aa).

The first 18 residues, 1–18 (MRKRISAIIMTLFMVFMS), serve as a signal peptide directing secretion. A lipid anchor (N-palmitoyl cysteine) is attached at Cys19. Cys19 is lipidated: S-diacylglycerol cysteine. Residues 151-174 (LGKNDASDDDTKKAIKKDNSDKTK) form a disordered region. Residues 155–174 (DASDDDTKKAIKKDNSDKTK) are compositionally biased toward basic and acidic residues.

The protein belongs to the variable small protein (Vsp) family.

The protein localises to the cell outer membrane. The Vlp and Vsp proteins are antigenically distinct proteins, only one vlp or vsp gene is transcriptionally active at any one time. Switching between these genes is a mechanism of host immune response evasion. This chain is Variable small protein 22, found in Borrelia hermsii.